A 60-amino-acid chain; its full sequence is UPF0434 protein Ssed_2824 (60 aa).

It belongs to the UPF0434 family.

This Shewanella sediminis (strain HAW-EB3) protein is UPF0434 protein Ssed_2824.